Here is a 275-residue protein sequence, read N- to C-terminus: Fos-related antigen 1 (275 aa).

2 disordered regions span residues 1 to 33 (MYRD…QTVQ) and 71 to 115 (TYPQ…VRRE). Over residues 7–33 (EPGPSSGAGSAYGRPAQPQQAQTQTVQ) the composition is skewed to low complexity. In terms of domain architecture, bZIP spans 107-170 (EERRRVRRER…ERLELVLEAH (64 aa)). A basic motif region spans residues 109–129 (RRRVRRERNKLAAAKCRNRRK). Positions 135–163 (LQAETDKLEDEKSGLQREIEELQKQKERL) are leucine-zipper. A compositionally biased stretch (basic and acidic residues) spans 171-184 (RPICKIPEEDKKDT). The disordered stretch occupies residues 171–275 (RPICKIPEED…PLGSPTLLAL (105 aa)). Composition is skewed to low complexity over residues 185–194 (GGTSSTSGAG), 219–237 (LHTP…TPSL), and 256–275 (SSSS…LLAL). S269 is modified (phosphoserine).

This sequence belongs to the bZIP family. Fos subfamily. Heterodimer. Interacts with the BAF multiprotein chromatin-remodeling complex subunits SMARCB1 and SMARCD1. Interacts with ARID1A and JUN.

The protein localises to the nucleus. This Rattus norvegicus (Rat) protein is Fos-related antigen 1 (Fosl1).